Consider the following 282-residue polypeptide: Pantothenate synthetase (282 aa).

Residue Met26–His33 participates in ATP binding. His33 acts as the Proton donor in catalysis. Gln57 lines the (R)-pantoate pocket. Gln57 contacts beta-alanine. Residue Gly148–Asp151 participates in ATP binding. Gln154 is a binding site for (R)-pantoate. An ATP-binding site is contributed by Leu185–Arg188.

It belongs to the pantothenate synthetase family. In terms of assembly, homodimer.

It localises to the cytoplasm. It catalyses the reaction (R)-pantoate + beta-alanine + ATP = (R)-pantothenate + AMP + diphosphate + H(+). It functions in the pathway cofactor biosynthesis; (R)-pantothenate biosynthesis; (R)-pantothenate from (R)-pantoate and beta-alanine: step 1/1. In terms of biological role, catalyzes the condensation of pantoate with beta-alanine in an ATP-dependent reaction via a pantoyl-adenylate intermediate. This is Pantothenate synthetase from Polaromonas sp. (strain JS666 / ATCC BAA-500).